The following is a 59-amino-acid chain: MAVQQNKKSPSKRGMHRSHDFLTSAPIAVEATTGEVHLRHHVSPNGYYRGRKVVKTKND.

The interval M1–S24 is disordered.

Belongs to the bacterial ribosomal protein bL32 family.

The polypeptide is Large ribosomal subunit protein bL32 (Ralstonia nicotianae (strain ATCC BAA-1114 / GMI1000) (Ralstonia solanacearum)).